We begin with the raw amino-acid sequence, 147 residues long: Calcium-regulated heat-stable protein 1 (147 aa).

Pro residues predominate over residues methionine 1 to proline 12. Positions methionine 1 to serine 52 are disordered. An N-acetylserine modification is found at serine 2. Serine 30, serine 32, and serine 41 each carry phosphoserine. Phosphothreonine is present on threonine 45. Serine 52 and serine 58 each carry phosphoserine. A CSD domain is found at valine 62 to threonine 129. 2 positions are modified to phosphoserine: serine 146 and serine 147.

Homodimer. Interacts with STYX. Post-translationally, dephosphorylated by calcineurin in a Ca(2+) dependent manner. Can be phosphorylated by DYRK2 (in vitro).

The protein localises to the cytoplasm. The protein resides in the P-body. Its subcellular location is the cytoplasmic granule. Its function is as follows. Binds mRNA and regulates the stability of target mRNA. Binds single-stranded DNA (in vitro). The polypeptide is Calcium-regulated heat-stable protein 1 (CARHSP1) (Homo sapiens (Human)).